A 466-amino-acid polypeptide reads, in one-letter code: E3 SUMO-protein ligase TRIM60 (466 aa).

Residues 15 to 56 form an RING-type zinc finger; that stretch reads CYICSDFMEDPVTSRCGHNFCFACLRLLWDDLQGNIFCPVCQ. The segment at 91–132 adopts a B box-type zinc-finger fold; the sequence is EEHTVCPKHDQPLVLFCVRDRDVLCTQCSLSVEHQGHYTCPI. Cys-96, His-99, Cys-118, and His-124 together coordinate Zn(2+). Residues 171 to 223 are a coiled coil; that stretch reads LREEAQYQKIEIRYEIGQIKLFLQSEYEAHLNESHMEELRSFSELNGYLETLL. In terms of domain architecture, B30.2/SPRY spans 272–462; that stretch reads LSLPAQYSGL…LEILTHPTPD (191 aa).

It belongs to the TRIM/RBCC family.

In terms of biological role, E3 SUMO-protein ligase that mediates SUMOylation of TAB2 leading to inhibition of NF-kappa-B and MAPK pathways by suppressing the TRAF6/TAB2/TAK1 complex. This is E3 SUMO-protein ligase TRIM60 (Trim60) from Mus musculus (Mouse).